A 340-amino-acid polypeptide reads, in one-letter code: 4-amino-5-hydroxymethyl-2-methylpyrimidine phosphate synthase THI12 (340 aa).

Lys62 is subject to N6-(pyridoxal phosphate)lysine. His66 is a catalytic residue. 115 to 118 (GEFG) contributes to the pyridoxal 5'-phosphate binding site. The short motif at 195 to 199 (CCCFC) is the CCCFC; essential for catalytic activity, may be the site of iron coordination element.

This sequence belongs to the NMT1/THI5 family. As to quaternary structure, homodimer. Fe cation serves as cofactor.

The catalysed reaction is N(6)-(pyridoxal phosphate)-L-lysyl-[4-amino-5-hydroxymethyl-2-methylpyrimidine phosphate synthase] + L-histidyl-[4-amino-5-hydroxymethyl-2-methylpyrimidine phosphate synthase] + 2 Fe(3+) + 4 H2O = L-lysyl-[4-amino-5-hydroxymethyl-2-methylpyrimidine phosphate synthase] + (2S)-2-amino-5-hydroxy-4-oxopentanoyl-[4-amino-5-hydroxymethyl-2-methylpyrimidine phosphate synthase] + 4-amino-2-methyl-5-(phosphooxymethyl)pyrimidine + 3-oxopropanoate + 2 Fe(2+) + 2 H(+). It participates in cofactor biosynthesis; thiamine diphosphate biosynthesis. Responsible for the formation of the pyrimidine heterocycle in the thiamine biosynthesis pathway. Catalyzes the formation of hydroxymethylpyrimidine phosphate (HMP-P) from histidine and pyridoxal phosphate (PLP). The protein uses PLP and the active site histidine to form HMP-P, generating an inactive enzyme. The enzyme can only undergo a single turnover, which suggests it is a suicide enzyme. This chain is 4-amino-5-hydroxymethyl-2-methylpyrimidine phosphate synthase THI12, found in Saccharomyces cerevisiae (strain ATCC 204508 / S288c) (Baker's yeast).